A 177-amino-acid chain; its full sequence is ATP-dependent protease subunit HslV (177 aa).

Thr-6 is a catalytic residue. Residues Gly-161, Cys-164, and Thr-167 each contribute to the Na(+) site.

Belongs to the peptidase T1B family. HslV subfamily. In terms of assembly, a double ring-shaped homohexamer of HslV is capped on each side by a ring-shaped HslU homohexamer. The assembly of the HslU/HslV complex is dependent on binding of ATP.

It localises to the cytoplasm. The enzyme catalyses ATP-dependent cleavage of peptide bonds with broad specificity.. Allosterically activated by HslU binding. Its function is as follows. Protease subunit of a proteasome-like degradation complex believed to be a general protein degrading machinery. The protein is ATP-dependent protease subunit HslV of Petrotoga mobilis (strain DSM 10674 / SJ95).